Here is a 207-residue protein sequence, read N- to C-terminus: Putative threonylcarbamoyl-AMP synthase (207 aa).

Positions 15–199 constitute a YrdC-like domain; it reads EEERKKVLEF…KIISIREGVI (185 aa).

The protein belongs to the SUA5 family.

It localises to the cytoplasm. It catalyses the reaction L-threonine + hydrogencarbonate + ATP = L-threonylcarbamoyladenylate + diphosphate + H2O. Its function is as follows. Required for the formation of a threonylcarbamoyl group on adenosine at position 37 (t(6)A37) in tRNAs that read codons beginning with adenine. Catalyzes the conversion of L-threonine, HCO(3)(-)/CO(2) and ATP to give threonylcarbamoyl-AMP (TC-AMP) as the acyladenylate intermediate, with the release of diphosphate. This is Putative threonylcarbamoyl-AMP synthase from Methanocaldococcus jannaschii (strain ATCC 43067 / DSM 2661 / JAL-1 / JCM 10045 / NBRC 100440) (Methanococcus jannaschii).